Consider the following 352-residue polypeptide: Glycerol-1-phosphate dehydrogenase [NAD(P)+] (352 aa).

Residues 99–103 and 121–124 each bind NAD(+); these read GAKID and TAPS. Asp126 lines the substrate pocket. Ser130 lines the NAD(+) pocket. A substrate-binding site is contributed by Asp173. Zn(2+) is bound by residues Asp173 and His253. His257 provides a ligand contact to substrate. His269 provides a ligand contact to Zn(2+).

It belongs to the glycerol-1-phosphate dehydrogenase family. The cofactor is Zn(2+).

It localises to the cytoplasm. It catalyses the reaction sn-glycerol 1-phosphate + NAD(+) = dihydroxyacetone phosphate + NADH + H(+). The catalysed reaction is sn-glycerol 1-phosphate + NADP(+) = dihydroxyacetone phosphate + NADPH + H(+). Its pathway is membrane lipid metabolism; glycerophospholipid metabolism. Functionally, catalyzes the NAD(P)H-dependent reduction of dihydroxyacetonephosphate (DHAP or glycerone phosphate) to glycerol 1-phosphate (G1P). The G1P thus generated is used as the glycerophosphate backbone of phospholipids in the cellular membranes of Archaea. This Thermoplasma acidophilum (strain ATCC 25905 / DSM 1728 / JCM 9062 / NBRC 15155 / AMRC-C165) protein is Glycerol-1-phosphate dehydrogenase [NAD(P)+].